Reading from the N-terminus, the 288-residue chain is Protein-S-isoprenylcysteine O-methyltransferase (288 aa).

The helical transmembrane segment at 13-29 threads the bilayer; it reads SIVSFTLGASVISLPLL. The Lumenal portion of the chain corresponds to 30–45; that stretch reads TSSFTEQTLLAAAPGR. A helical membrane pass occupies residues 46 to 63; it reads IALVFFIAALNGLLLLLY. The Cytoplasmic segment spans residues 64 to 73; it reads KAQLYQVAIR. A helical transmembrane segment spans residues 74–91; that stretch reads ASFLGFAFGCGLLLSITQ. Residues 92–96 lie on the Lumenal side of the membrane; the sequence is SPWKP. Residues 97 to 116 traverse the membrane as a helical segment; that stretch reads FGWYVCSLSFFHYSEYLVTA. The Cytoplasmic segment spans residues 117 to 135; the sequence is MNNPRSLSIDSFLLNHSLE. Residues 136-153 form a helical membrane-spanning segment; the sequence is YTLAALSSWVEFTIETTI. Topologically, residues 154-158 are lumenal; that stretch reads YPDLK. Residues 159 to 178 form a helical membrane-spanning segment; it reads QITWLSVIGLIMVLFGEVLR. Residues 179–216 lie on the Cytoplasmic side of the membrane; sequence KCAMLTAGSNFNHIVQNEKSDSHTLVTSGVYSWFRHPS. S-adenosyl-L-methionine is bound by residues Gln194, 201–204, Tyr209, and 214–217; these read HTLV and HPSY. Residues 217–232 form a helical membrane-spanning segment; it reads YVGWFYWSIGTQVLLC. Asn233 is a topological domain (lumenal). The chain crosses the membrane as a helical span at residues 234–248; sequence PLCLVGYTLASWRFF. Residues 249–288 are Cytoplasmic-facing; the sequence is SERIEEEEFSLIHFFGENYLEYKKKVPTGLPFIKGVKMEP. Arg251 contacts substrate. S-adenosyl-L-methionine is bound at residue Glu255.

It belongs to the class VI-like SAM-binding methyltransferase superfamily. Isoprenylcysteine carboxyl methyltransferase family.

It is found in the endoplasmic reticulum membrane. The enzyme catalyses [protein]-C-terminal S-[(2E,6E)-farnesyl]-L-cysteine + S-adenosyl-L-methionine = [protein]-C-terminal S-[(2E,6E)-farnesyl]-L-cysteine methyl ester + S-adenosyl-L-homocysteine. Its function is as follows. Catalyzes the post-translational methylation of isoprenylated C-terminal cysteine residues. The sequence is that of Protein-S-isoprenylcysteine O-methyltransferase (icmt) from Xenopus laevis (African clawed frog).